The following is a 274-amino-acid chain: RNA polymerase sigma factor SigI4 (274 aa).

Positions Glu-87–Ile-100 match the Polymerase core binding motif. Positions Leu-226–Lys-245 form a DNA-binding region, H-T-H motif.

This sequence belongs to the sigma-70 factor family. SigI subfamily. Interacts with RsgI4.

Its subcellular location is the cytoplasm. Negatively regulated by the anti-sigma-I factor RsgI4. Binding of the polysaccharide substrate to RsgI4 may lead to the release and activation of SigI4. Its function is as follows. Sigma factors are initiation factors that promote the attachment of RNA polymerase to specific initiation sites and are then released. This sigma factor is involved in regulation of cellulosomal genes via an external polysaccharide-sensing mechanism. The chain is RNA polymerase sigma factor SigI4 from Acetivibrio thermocellus (strain ATCC 27405 / DSM 1237 / JCM 9322 / NBRC 103400 / NCIMB 10682 / NRRL B-4536 / VPI 7372) (Clostridium thermocellum).